The sequence spans 27 residues: Alpha-amylase/trypsin inhibitor CM17 (27 aa).

It belongs to the protease inhibitor I6 (cereal trypsin/alpha-amylase inhibitor) family. As to expression, developing endosperm.

The protein localises to the secreted. Its function is as follows. Alpha-amylase/trypsin inhibitor. It could be involved in insect defense mechanisms. The polypeptide is Alpha-amylase/trypsin inhibitor CM17 (Triticum aestivum (Wheat)).